Here is a 392-residue protein sequence, read N- to C-terminus: Xylose operon regulatory protein (392 aa).

Positions 288–386 (IQAMHYIRNH…DTTPKEYRDV (99 aa)) constitute an HTH araC/xylS-type domain. 2 DNA-binding regions (H-T-H motif) span residues 305–326 (DQVL…KEEV) and 353–376 (INEI…KKAY).

Regulatory protein for the xylBAFGHR operon. This Escherichia coli O157:H7 protein is Xylose operon regulatory protein (xylR).